Here is a 127-residue protein sequence, read N- to C-terminus: MATVSRKKKKVKVTPEGTVHIKASFNNIMVTITDVLGNTVSWSSAGKNGFKGSKKNTPYASQITSEAAAKEAFDLGMRHVNVLIKGPGAGRDAAIRALQGAGLEVRSIKDITPLPHNGCRPPKRRRV.

It belongs to the universal ribosomal protein uS11 family. Part of the 30S ribosomal subunit. Interacts with proteins S7 and S18. Binds to IF-3.

Located on the platform of the 30S subunit, it bridges several disparate RNA helices of the 16S rRNA. Forms part of the Shine-Dalgarno cleft in the 70S ribosome. This Chlorobium phaeobacteroides (strain DSM 266 / SMG 266 / 2430) protein is Small ribosomal subunit protein uS11.